The following is a 167-amino-acid chain: Endothelin-3 (167 aa).

Residues 1-19 (MELGLWLLLGLTVTSAAAA) form the signal peptide. Positions 20-50 (LPAQPGNAGQERGPGRSGDQEEKRVPAHHRP) are excised as a propeptide. Residues 22 to 45 (AQPGNAGQERGPGRSGDQEEKRVP) are disordered. Cystine bridges form between C53/C67 and C55/C63. The propeptide occupies 74-167 (INTPEQTVPY…KSRTDKVHQP (94 aa)). The disordered stretch occupies residues 85-112 (LSNHRGSLRGKRSSGPVPESSQSSPQTR). Over residues 97–109 (SSGPVPESSQSSP) the composition is skewed to low complexity. Residues 115-135 (CACSGVDDKACAYFCAHVTSY) form an endothelin-like region. The span at 140-149 (EKAAAEEKQE) shows a compositional bias: basic and acidic residues. The tract at residues 140–167 (EKAAAEEKQETGGPRQRLKSRTDKVHQP) is disordered.

This sequence belongs to the endothelin/sarafotoxin family.

It localises to the secreted. Its function is as follows. Endothelins are endothelium-derived vasoconstrictor peptides. The sequence is that of Endothelin-3 (Edn3) from Rattus norvegicus (Rat).